We begin with the raw amino-acid sequence, 556 residues long: (S)-N-methylcanadine 1-hydroxylase CYP82Y1 (556 aa).

The chain crosses the membrane as a helical span at residues 18–38; it reads TAVGTLILAFLLTLSPVIIYY. Position 500 (cysteine 500) interacts with heme.

This sequence belongs to the cytochrome P450 family. The cofactor is heme. Highly expressed in capsules. Expressed is stems.

Its subcellular location is the membrane. It carries out the reaction (S)-cis-N-methylcanadine + reduced [NADPH--hemoprotein reductase] + O2 = (S)-1-hydroxy-N-methylcanadine + oxidized [NADPH--hemoprotein reductase] + H2O + H(+). The protein operates within alkaloid biosynthesis. Its function is as follows. Cytochrome P450 involved in the biosynthesis of the benzylisoquinoline alkaloid noscapine. Converts (S)-N-methylcanadine to (S)-1-hydroxy-N-methylcanadine. The chain is (S)-N-methylcanadine 1-hydroxylase CYP82Y1 from Papaver somniferum (Opium poppy).